The chain runs to 309 residues: Branched-chain-amino-acid aminotransferase (309 aa).

At K160 the chain carries N6-(pyridoxal phosphate)lysine.

Belongs to the class-IV pyridoxal-phosphate-dependent aminotransferase family. Homohexamer. Pyridoxal 5'-phosphate is required as a cofactor.

The enzyme catalyses L-leucine + 2-oxoglutarate = 4-methyl-2-oxopentanoate + L-glutamate. It catalyses the reaction L-isoleucine + 2-oxoglutarate = (S)-3-methyl-2-oxopentanoate + L-glutamate. It carries out the reaction L-valine + 2-oxoglutarate = 3-methyl-2-oxobutanoate + L-glutamate. The protein operates within amino-acid biosynthesis; L-isoleucine biosynthesis; L-isoleucine from 2-oxobutanoate: step 4/4. It participates in amino-acid biosynthesis; L-leucine biosynthesis; L-leucine from 3-methyl-2-oxobutanoate: step 4/4. It functions in the pathway amino-acid biosynthesis; L-valine biosynthesis; L-valine from pyruvate: step 4/4. Acts on leucine, isoleucine and valine. This is Branched-chain-amino-acid aminotransferase (ilvE) from Escherichia coli O157:H7.